Reading from the N-terminus, the 311-residue chain is Probable dihydroorotate dehydrogenase A (fumarate) (311 aa).

Substrate contacts are provided by residues lysine 45, 69 to 73 (NSMGL), and asparagine 128. Residue 45–46 (KT) participates in FMN binding. Asparagine 128 contributes to the FMN binding site. The active-site Nucleophile is the cysteine 131. FMN is bound by residues lysine 165 and valine 193. 194-195 (NS) provides a ligand contact to substrate. FMN is bound by residues glycine 220, 248 to 249 (GG), and 270 to 271 (GT).

The protein belongs to the dihydroorotate dehydrogenase family. Type 1 subfamily. Homodimer. The cofactor is FMN.

Its subcellular location is the cytoplasm. It catalyses the reaction (S)-dihydroorotate + fumarate = orotate + succinate. Its pathway is pyrimidine metabolism; UMP biosynthesis via de novo pathway. Functionally, catalyzes the conversion of dihydroorotate to orotate with fumarate as the electron acceptor. The chain is Probable dihydroorotate dehydrogenase A (fumarate) (pyrDA) from Streptococcus pneumoniae serotype 4 (strain ATCC BAA-334 / TIGR4).